A 51-amino-acid chain; its full sequence is Putative antitoxin VapB6 (51 aa).

Antitoxin component of a possible type II toxin-antitoxin (TA) system. The cognate toxin is VapC6. In Mycobacterium tuberculosis (strain CDC 1551 / Oshkosh), this protein is Putative antitoxin VapB6 (vapB6).